We begin with the raw amino-acid sequence, 237 residues long: Large ribosomal subunit protein uL1 (237 aa).

It belongs to the universal ribosomal protein uL1 family. As to quaternary structure, part of the 50S ribosomal subunit.

In terms of biological role, binds directly to 23S rRNA. The L1 stalk is quite mobile in the ribosome, and is involved in E site tRNA release. Protein L1 is also a translational repressor protein, it controls the translation of the L11 operon by binding to its mRNA. This is Large ribosomal subunit protein uL1 from Thermosynechococcus vestitus (strain NIES-2133 / IAM M-273 / BP-1).